Reading from the N-terminus, the 235-residue chain is Class B acid phosphatase (235 aa).

The N-terminal stretch at 1–22 (MKNLLKLSAIAILAASAVSTFA) is a signal peptide. Residue Asp67 is the Nucleophile of the active site. 2 residues coordinate Mg(2+): Asp67 and Asp69. Asp69 functions as the Proton donor in the catalytic mechanism. Substrate-binding positions include 135 to 136 (TG) and Lys175. Asp190 contacts Mg(2+).

It belongs to the class B bacterial acid phosphatase family. Homotetramer. It depends on Mg(2+) as a cofactor.

The protein localises to the periplasm. The catalysed reaction is a phosphate monoester + H2O = an alcohol + phosphate. Functionally, dephosphorylates several organic phosphate monoesters. Also has a phosphotransferase activity catalyzing the transfer of low-energy phosphate groups from organic phosphate monoesters to free hydroxyl groups of various organic compounds. The sequence is that of Class B acid phosphatase from Haemophilus parainfluenzae (strain T3T1).